The chain runs to 1400 residues: DNA-directed RNA polymerase subunit beta' (1400 aa).

4 residues coordinate Zn(2+): C71, C73, C86, and C89. Residues D462, D464, and D466 each contribute to the Mg(2+) site. Residues C820, C893, C900, and C903 each coordinate Zn(2+).

The protein belongs to the RNA polymerase beta' chain family. In terms of assembly, the RNAP catalytic core consists of 2 alpha, 1 beta, 1 beta' and 1 omega subunit. When a sigma factor is associated with the core the holoenzyme is formed, which can initiate transcription. The cofactor is Mg(2+). It depends on Zn(2+) as a cofactor.

The enzyme catalyses RNA(n) + a ribonucleoside 5'-triphosphate = RNA(n+1) + diphosphate. Functionally, DNA-dependent RNA polymerase catalyzes the transcription of DNA into RNA using the four ribonucleoside triphosphates as substrates. The protein is DNA-directed RNA polymerase subunit beta' of Methylobacterium nodulans (strain LMG 21967 / CNCM I-2342 / ORS 2060).